Consider the following 676-residue polypeptide: MFTVTPAKIYLNQEKTPVSEQFNDVYFSNQDGLAESEYVFQQGNHLWERWIVYQEKHFVIAETGFGTGLNFLAVTSLFRQFRQQYPDFPLKRLFFISFEKYPLPKDQLQQIHRLYPQFSALSQQLCDYCLDAIQGCQRFHFAETTLDLWFGDIADNLPQLGDYMQNRIDAWFLDGFSPSKNPQMWNDKLYQQIFYYSKPQGTFATFTAASAVRKGLISAGFEVQKRKGYGKKRECLCGIKNSTQQQNAKFPWYLNQPASLLSEDIAIIGGGIASLFTALSLLKRGAKVTLYCEDEQLALNASGNKQGAFYPQLSDDDDRNIRFYVHAFFYALQQLQWAIKQGIEFEHEFCGVALCAYDHKSAVKLAKISSYQWSKSLYQNLNKEQLSEKIGLPLDCAGGFIPQGAWLAPRQFVQNAFSYLQQLGLEIKTSQKITALDYRNLQWVLTNEQNETFNHQVVVLANGYQITDFVQTAKLPLYPVRGQVSQIPTSANLLKLKSVLCYDGYLTPADKMKQSHCLGASHIRNNKDRHFSHQEQRENQQKIQQNLASTDTDKNMDWLQDIDISANIARIGVRCSVRDRVPIMGNVPHFEQQCLDYRNIFNLRRRKQPIPDAAQWKNLYLIGALGSRGLTSAALLGETLASLIYAEPLPLSEDILHNLSPNRSWIRKLLKGTEIK.

The tract at residues Met1 to Asn241 is tRNA (mnm(5)s(2)U34)-methyltransferase. Residues Ile268 to Lys676 form an FAD-dependent cmnm(5)s(2)U34 oxidoreductase region.

The protein in the N-terminal section; belongs to the methyltransferase superfamily. tRNA (mnm(5)s(2)U34)-methyltransferase family. It in the C-terminal section; belongs to the DAO family. FAD is required as a cofactor.

It localises to the cytoplasm. It carries out the reaction 5-aminomethyl-2-thiouridine(34) in tRNA + S-adenosyl-L-methionine = 5-methylaminomethyl-2-thiouridine(34) in tRNA + S-adenosyl-L-homocysteine + H(+). In terms of biological role, catalyzes the last two steps in the biosynthesis of 5-methylaminomethyl-2-thiouridine (mnm(5)s(2)U) at the wobble position (U34) in tRNA. Catalyzes the FAD-dependent demodification of cmnm(5)s(2)U34 to nm(5)s(2)U34, followed by the transfer of a methyl group from S-adenosyl-L-methionine to nm(5)s(2)U34, to form mnm(5)s(2)U34. In Histophilus somni (strain 129Pt) (Haemophilus somnus), this protein is tRNA 5-methylaminomethyl-2-thiouridine biosynthesis bifunctional protein MnmC.